We begin with the raw amino-acid sequence, 172 residues long: ATP synthase subunit b (172 aa).

Residues 27–47 form a helical membrane-spanning segment; it reads LAIVIFGLYKFLPPFVGGILE.

The protein belongs to the ATPase B chain family. In terms of assembly, F-type ATPases have 2 components, F(1) - the catalytic core - and F(0) - the membrane proton channel. F(1) has five subunits: alpha(3), beta(3), gamma(1), delta(1), epsilon(1). F(0) has four main subunits: a(1), b(1), b'(1) and c(10-14). The alpha and beta chains form an alternating ring which encloses part of the gamma chain. F(1) is attached to F(0) by a central stalk formed by the gamma and epsilon chains, while a peripheral stalk is formed by the delta, b and b' chains.

Its subcellular location is the cellular thylakoid membrane. In terms of biological role, f(1)F(0) ATP synthase produces ATP from ADP in the presence of a proton or sodium gradient. F-type ATPases consist of two structural domains, F(1) containing the extramembraneous catalytic core and F(0) containing the membrane proton channel, linked together by a central stalk and a peripheral stalk. During catalysis, ATP synthesis in the catalytic domain of F(1) is coupled via a rotary mechanism of the central stalk subunits to proton translocation. Its function is as follows. Component of the F(0) channel, it forms part of the peripheral stalk, linking F(1) to F(0). The sequence is that of ATP synthase subunit b from Prochlorococcus marinus (strain MIT 9303).